The sequence spans 255 residues: Adenosylcobinamide-GDP ribazoletransferase (255 aa).

The next 7 helical transmembrane spans lie at 33-53 (IFLP…IELF), 57-77 (FPGF…SGAL), 107-127 (VGSM…GSYA), 136-156 (FTVL…IYSF), 174-194 (AGLI…AAFF), 196-216 (FSLI…FVVA), and 234-254 (IMEL…NIGV).

Belongs to the CobS family. The cofactor is Mg(2+).

It localises to the cell membrane. The catalysed reaction is alpha-ribazole + adenosylcob(III)inamide-GDP = adenosylcob(III)alamin + GMP + H(+). It carries out the reaction alpha-ribazole 5'-phosphate + adenosylcob(III)inamide-GDP = adenosylcob(III)alamin 5'-phosphate + GMP + H(+). The protein operates within cofactor biosynthesis; adenosylcobalamin biosynthesis; adenosylcobalamin from cob(II)yrinate a,c-diamide: step 7/7. In terms of biological role, joins adenosylcobinamide-GDP and alpha-ribazole to generate adenosylcobalamin (Ado-cobalamin). Also synthesizes adenosylcobalamin 5'-phosphate from adenosylcobinamide-GDP and alpha-ribazole 5'-phosphate. This Carboxydothermus hydrogenoformans (strain ATCC BAA-161 / DSM 6008 / Z-2901) protein is Adenosylcobinamide-GDP ribazoletransferase.